A 307-amino-acid polypeptide reads, in one-letter code: Protease HtpX homolog (307 aa).

The next 2 membrane-spanning stretches (helical) occupy residues 7–27 and 28–48; these read AILL…IGGA and SGAT…YWNS. Histidine 130 contributes to the Zn(2+) binding site. Glutamate 131 is a catalytic residue. Position 134 (histidine 134) interacts with Zn(2+). The next 2 membrane-spanning stretches (helical) occupy residues 145–165 and 171–191; these read ITAT…FFGG and GPGI…AMLV. Glutamate 200 contacts Zn(2+). The tract at residues 277–307 is disordered; it reads AGQSGGGLAPGGPPPDPSSPWNKGSRRGPWG.

Belongs to the peptidase M48B family. The cofactor is Zn(2+).

It localises to the cell inner membrane. This Nitrobacter winogradskyi (strain ATCC 25391 / DSM 10237 / CIP 104748 / NCIMB 11846 / Nb-255) protein is Protease HtpX homolog.